The sequence spans 212 residues: Lipopolysaccharide core heptose(II)-phosphate phosphatase (212 aa).

Positions 1–32 (MSIGGVYELAFCRSSLKSKKYFIILLALAAIA) are cleaved as a signal peptide.

Belongs to the phosphoglycerate mutase family. Ais subfamily.

It is found in the periplasm. It participates in bacterial outer membrane biogenesis; lipopolysaccharide metabolism. Its function is as follows. Catalyzes the dephosphorylation of heptose(II) of the outer membrane lipopolysaccharide core. The chain is Lipopolysaccharide core heptose(II)-phosphate phosphatase from Shigella boydii serotype 4 (strain Sb227).